Here is a 352-residue protein sequence, read N- to C-terminus: Ubiquitin thioesterase otulin (352 aa).

The disordered stretch occupies residues 1–49 (MSRGTMPQPGAWPGASCAETPAREAGAAARDGGKVTAGAQPRAATRCPA). Positions 18 to 30 (AETPAREAGAAAR) are enriched in low complexity. A coiled-coil region spans residues 49 to 73 (AEHEEDMYRAADEIEKEKELLIHER). Residues 52 to 57 (EEDMYR) carry the PIM motif motif. Tyr-56 bears the Phosphotyrosine mark. Linear diubiquitin binding regions lie at residues 95 to 96 (EW) and 124 to 126 (RGD). Positions 118–346 (TSIRRVRGDN…DRHYNIPVRV (229 aa)) constitute an OTU domain. Residue Asp-126 is part of the active site. Cys-129 functions as the Nucleophile in the catalytic mechanism. 3 linear diubiquitin binding regions span residues 255-259 (FFSVL), 283-289 (TGGLEQV), and 336-338 (DDR). The active site involves His-339. The short motif at 349 to 352 (ETSV) is the PDZ-binding element.

Belongs to the peptidase C65 family. Otulin subfamily. In terms of assembly, interacts (via the PUB domain) with RNF31 (via the PIM motif); the interaction is direct. Interacts with DVL2. Post-translationally, ubiquitinated. Acetylated. In terms of processing, phosphorylated. Phosphorylation at Tyr-56 prevents interaction with RNF31; dephosphorylation promotes interaction with RNF31 and the LUBAC complex.

It localises to the cytoplasm. The catalysed reaction is Thiol-dependent hydrolysis of ester, thioester, amide, peptide and isopeptide bonds formed by the C-terminal Gly of ubiquitin (a 76-residue protein attached to proteins as an intracellular targeting signal).. Its function is as follows. Deubiquitinase that specifically removes linear ('Met-1'-linked) polyubiquitin chains to substrates and acts as a regulator of angiogenesis and innate immune response. Required during angiogenesis, craniofacial and neuronal development by regulating the canonical Wnt signaling together with the LUBAC complex. Acts as a negative regulator of NF-kappa-B by regulating the activity of the LUBAC complex. OTULIN function is mainly restricted to homeostasis of the LUBAC complex: acts by removing 'Met-1'-linked autoubiquitination of the LUBAC complex, thereby preventing inactivation of the LUBAC complex. Acts as a key negative regulator of inflammation by restricting spontaneous inflammation and maintaining immune homeostasis. In myeloid cell, required to prevent unwarranted secretion of cytokines leading to inflammation and autoimmunity by restricting linear polyubiquitin formation. Plays a role in innate immune response by restricting linear polyubiquitin formation on LUBAC complex in response to NOD2 stimulation, probably to limit NOD2-dependent pro-inflammatory signaling. The polypeptide is Ubiquitin thioesterase otulin (Mus musculus (Mouse)).